The primary structure comprises 221 residues: Urease accessory protein UreF (221 aa).

Belongs to the UreF family. UreD, UreF and UreG form a complex that acts as a GTP-hydrolysis-dependent molecular chaperone, activating the urease apoprotein by helping to assemble the nickel containing metallocenter of UreC. The UreE protein probably delivers the nickel.

It localises to the cytoplasm. Its function is as follows. Required for maturation of urease via the functional incorporation of the urease nickel metallocenter. In Microcystis aeruginosa (strain NIES-843 / IAM M-2473), this protein is Urease accessory protein UreF.